The following is a 582-amino-acid chain: Peptidyl-prolyl cis-trans isomerase FKBP10 (582 aa).

The N-terminal stretch at 1–26 (MFPAGPPSHSLLRLPLLQLLLLVVQA) is a signal peptide. PPIase FKBP-type domains lie at 62 to 150 (GDFV…LDVW), 174 to 262 (GDFV…IDVH), and 286 to 374 (GDFM…IDFH). N-linked (GlcNAc...) asparagine glycosylation is found at asparagine 70, asparagine 182, asparagine 294, asparagine 310, asparagine 352, asparagine 393, and asparagine 407. The 88-residue stretch at 399–486 (GDFVRYHYNC…LFEVELVSRE (88 aa)) folds into the PPIase FKBP-type 4 domain. 2 EF-hand domains span residues 497-532 (WHKDPPANLFEDMDLNKDGEVPPEEFSTFIKAQVSE) and 542-577 (DPEKTIGDMFQNQDRNQDGKITVDELKLKSDEDEER). Residues aspartate 510, asparagine 512, aspartate 514, glutamate 516, glutamate 521, aspartate 555, asparagine 557, aspartate 559, lysine 561, and glutamate 566 each contribute to the Ca(2+) site. The segment at 533–582 (GKGRLMPGQDPEKTIGDMFQNQDRNQDGKITVDELKLKSDEDEERVHEEL) is disordered. A compositionally biased stretch (basic and acidic residues) spans 556–582 (RNQDGKITVDELKLKSDEDEERVHEEL). The Prevents secretion from ER motif lies at 579-582 (HEEL).

In terms of processing, glycosylated and phosphorylated.

The protein localises to the endoplasmic reticulum lumen. The catalysed reaction is [protein]-peptidylproline (omega=180) = [protein]-peptidylproline (omega=0). Inhibited by both FK506 and rapamycin, but not by cyclosporin A. In terms of biological role, PPIases accelerate the folding of proteins during protein synthesis. This is Peptidyl-prolyl cis-trans isomerase FKBP10 (FKBP10) from Homo sapiens (Human).